Consider the following 238-residue polypeptide: Zinc import ATP-binding protein ZnuC (238 aa).

In terms of domain architecture, ABC transporter spans 5–220 (ITLKNIHVSF…LEFISIFGLK (216 aa)). ATP is bound at residue 37 to 44 (GPNGAGKS).

The protein belongs to the ABC transporter superfamily. Zinc importer (TC 3.A.1.15.5) family. As to quaternary structure, the complex is composed of two ATP-binding proteins (ZnuC), two transmembrane proteins (ZnuB) and a solute-binding protein (ZnuA).

It localises to the cell inner membrane. The catalysed reaction is Zn(2+)(out) + ATP(in) + H2O(in) = Zn(2+)(in) + ADP(in) + phosphate(in) + H(+)(in). In terms of biological role, part of the ABC transporter complex ZnuABC involved in zinc import. Responsible for energy coupling to the transport system. This is Zinc import ATP-binding protein ZnuC from Buchnera aphidicola subsp. Schizaphis graminum (strain Sg).